Reading from the N-terminus, the 99-residue chain is Acylphosphatase-2 (99 aa).

An N-acetylserine modification is found at S2. One can recognise an Acylphosphatase-like domain in the interval 9-99; the sequence is SVDYEVFGRV…LEYSNFSIRY (91 aa). Catalysis depends on residues R24 and N42. S93 bears the Phosphoserine mark.

This sequence belongs to the acylphosphatase family.

It catalyses the reaction an acyl phosphate + H2O = a carboxylate + phosphate + H(+). In terms of biological role, its physiological role is not yet clear. This Cavia porcellus (Guinea pig) protein is Acylphosphatase-2 (ACYP2).